We begin with the raw amino-acid sequence, 152 residues long: Protein-export protein SecB (152 aa).

This sequence belongs to the SecB family. Homotetramer, a dimer of dimers. One homotetramer interacts with 1 SecA dimer.

It localises to the cytoplasm. Functionally, one of the proteins required for the normal export of preproteins out of the cell cytoplasm. It is a molecular chaperone that binds to a subset of precursor proteins, maintaining them in a translocation-competent state. It also specifically binds to its receptor SecA. This is Protein-export protein SecB from Rickettsia peacockii (strain Rustic).